We begin with the raw amino-acid sequence, 340 residues long: 4-hydroxy-2-oxovalerate aldolase (340 aa).

One can recognise a Pyruvate carboxyltransferase domain in the interval 8–260 (VILHDMSLRD…SHGINLYDIM (253 aa)). 16–17 (RD) provides a ligand contact to substrate. Aspartate 17 is a binding site for Mn(2+). Histidine 20 (proton acceptor) is an active-site residue. Substrate contacts are provided by serine 170 and histidine 199. The Mn(2+) site is built by histidine 199 and histidine 201. Tyrosine 290 serves as a coordination point for substrate.

This sequence belongs to the 4-hydroxy-2-oxovalerate aldolase family.

The catalysed reaction is (S)-4-hydroxy-2-oxopentanoate = acetaldehyde + pyruvate. The sequence is that of 4-hydroxy-2-oxovalerate aldolase from Shewanella pealeana (strain ATCC 700345 / ANG-SQ1).